We begin with the raw amino-acid sequence, 589 residues long: Proton pump-interactor 2 (589 aa).

Positions Glu205 to Lys245 form a coiled coil. Composition is skewed to basic and acidic residues over residues Lys370 to Ser383, Thr395 to Asp408, Val426 to Gln450, and Glu504 to Ser534. 2 disordered regions span residues Lys370 to Gln450 and Lys485 to Ser534. A coiled-coil region spans residues Lys431 to Ser500. A helical transmembrane segment spans residues Trp568 to Leu588.

It belongs to the plant Proton pump-interactor protein family. In terms of tissue distribution, expressed in seedlings and flowers.

The protein localises to the cell membrane. The protein resides in the endoplasmic reticulum membrane. May regulate plasma membrane ATPase activity. The protein is Proton pump-interactor 2 (PPI2) of Arabidopsis thaliana (Mouse-ear cress).